Consider the following 148-residue polypeptide: ATP synthase epsilon chain (148 aa).

It belongs to the ATPase epsilon chain family. In terms of assembly, F-type ATPases have 2 components, CF(1) - the catalytic core - and CF(0) - the membrane proton channel. CF(1) has five subunits: alpha(3), beta(3), gamma(1), delta(1), epsilon(1). CF(0) has three main subunits: a, b and c.

It is found in the cell membrane. Produces ATP from ADP in the presence of a proton gradient across the membrane. The chain is ATP synthase epsilon chain from Streptococcus thermophilus (strain ATCC BAA-491 / LMD-9).